Here is a 252-residue protein sequence, read N- to C-terminus: Putative pinene synthase (252 aa).

The protein belongs to the terpene synthase family. Tpsa subfamily.

The polypeptide is Putative pinene synthase (Fragaria ananassa (Strawberry)).